Here is a 198-residue protein sequence, read N- to C-terminus: Holliday junction branch migration complex subunit RuvA (198 aa).

The domain I stretch occupies residues 1 to 63 (MYDYIKGQLT…EDAHLLFGFH (63 aa)). The tract at residues 64–142 (TEDEKDVFLK…EAPQETGHTK (79 aa)) is domain II. The tract at residues 143–147 (ARSNK) is flexible linker. The domain III stretch occupies residues 148–198 (AGNTQLDEAIEALLALGYKAKELKKIRAFFEETSETAEQYIKSALKLLMKG).

Belongs to the RuvA family. Homotetramer. Forms an RuvA(8)-RuvB(12)-Holliday junction (HJ) complex. HJ DNA is sandwiched between 2 RuvA tetramers; dsDNA enters through RuvA and exits via RuvB. An RuvB hexamer assembles on each DNA strand where it exits the tetramer. Each RuvB hexamer is contacted by two RuvA subunits (via domain III) on 2 adjacent RuvB subunits; this complex drives branch migration. In the full resolvosome a probable DNA-RuvA(4)-RuvB(12)-RuvC(2) complex forms which resolves the HJ.

The protein localises to the cytoplasm. Its function is as follows. The RuvA-RuvB-RuvC complex processes Holliday junction (HJ) DNA during genetic recombination and DNA repair, while the RuvA-RuvB complex plays an important role in the rescue of blocked DNA replication forks via replication fork reversal (RFR). RuvA specifically binds to HJ cruciform DNA, conferring on it an open structure. The RuvB hexamer acts as an ATP-dependent pump, pulling dsDNA into and through the RuvAB complex. HJ branch migration allows RuvC to scan DNA until it finds its consensus sequence, where it cleaves and resolves the cruciform DNA. The polypeptide is Holliday junction branch migration complex subunit RuvA (Streptococcus pyogenes serotype M2 (strain MGAS10270)).